A 316-amino-acid chain; its full sequence is Diacylglycerol kinase (316 aa).

The DAGKc domain occupies 1–132 (MRKRARIIYN…VDIGKMNNRY (132 aa)). Residues 10–14 (NPTSG), Thr41, 67–73 (GDGTLNE), and Thr94 each bind ATP. Lys213, Asp216, and Tyr218 together coordinate Mg(2+). The active-site Proton acceptor is the Glu273.

This sequence belongs to the diacylglycerol/lipid kinase family. As to quaternary structure, homodimer. The cofactor is Mg(2+).

The enzyme catalyses a 1,2-diacyl-sn-glycerol + ATP = a 1,2-diacyl-sn-glycero-3-phosphate + ADP + H(+). In terms of biological role, catalyzes the phosphorylation of diacylglycerol (DAG) into phosphatidic acid. Is a key enzyme involved in the production of lipoteichoic acid by reintroducing DAG formed from the breakdown of membrane phospholipids into the phosphatidylglycerol biosynthetic pathway. The sequence is that of Diacylglycerol kinase (dagK) from Staphylococcus epidermidis (strain ATCC 35984 / DSM 28319 / BCRC 17069 / CCUG 31568 / BM 3577 / RP62A).